The sequence spans 407 residues: Betaine--homocysteine S-methyltransferase 1 (407 aa).

A Hcy-binding domain is found at 11–314 (KGILERLNSG…YHIRAIAEEL (304 aa)). N6-succinyllysine is present on residues Lys40, Lys93, and Lys98. Residue Cys217 coordinates Zn(2+). N6-succinyllysine occurs at positions 232 and 241. Residues Cys299 and Cys300 each coordinate Zn(2+). The residue at position 330 (Ser330) is a Phosphoserine. Residues Lys340 and Lys377 each carry the N6-succinyllysine modification.

As to quaternary structure, homotetramer. Requires Zn(2+) as cofactor.

It is found in the cytoplasm. The protein resides in the cytosol. The protein localises to the nucleus. It carries out the reaction L-homocysteine + glycine betaine = N,N-dimethylglycine + L-methionine. It functions in the pathway amine and polyamine degradation; betaine degradation; sarcosine from betaine: step 1/2. It participates in amino-acid biosynthesis; L-methionine biosynthesis via de novo pathway; L-methionine from L-homocysteine (BhmT route): step 1/1. Its function is as follows. Involved in the regulation of homocysteine metabolism. Converts betaine and homocysteine to dimethylglycine and methionine, respectively. This reaction is also required for the irreversible oxidation of choline. The sequence is that of Betaine--homocysteine S-methyltransferase 1 (BHMT) from Bos taurus (Bovine).